Consider the following 388-residue polypeptide: Serpin B11 (388 aa).

The tract at residues glutamate 338–phenylalanine 362 is RCL.

Belongs to the serpin family. Ov-serpin subfamily. As to expression, expressed in eye, lung, lymphocytes, thymus, stomach, uterus, heart, brain, liver, skeletal muscle, and in day 7, 15, and 17 embryos.

It is found in the cytoplasm. Functionally, inhibitor of serine proteases. Has moderate inhibitory activity for trypsin-like peptidases, but also some activity with cysteine peptidases, cathepsin L, K, and V, and the serine peptidase, tryptase gamma. This is Serpin B11 (Serpinb11) from Mus musculus (Mouse).